The primary structure comprises 47 residues: Snake venom metalloproteinase jararafibrase-4 (47 aa).

Residues 6–47 enclose the Peptidase M12B domain; the sequence is RYIELFLVVDHGMFMKYNGNSDKIYYYIHQMVNIMKXAYXYL. Glu-9 lines the Ca(2+) pocket.

Belongs to the venom metalloproteinase (M12B) family. As to quaternary structure, monomer. Zn(2+) serves as cofactor. Expressed by the venom gland.

It is found in the secreted. With respect to regulation, inhibited by 1,10-phenanthroline and EDTA. The metalloproteinase is a probable venom zinc protease that induces local hemorrhage in the skin of rats. Degrades type-IV collagen, gelatin, laminin and fibronectin. Has fibrinolytic activities. Has high hemagglutinating activity on red blood cells. Cleaves insulin B chain at 29-His-|-Leu-30, and 38-Ala-|-Leu-39 bonds. This is Snake venom metalloproteinase jararafibrase-4 from Bothrops jararaca (Jararaca).